Here is a 168-residue protein sequence, read N- to C-terminus: tRNA-splicing endonuclease (168 aa).

Catalysis depends on residues Tyr-107, His-114, and Lys-145.

This sequence belongs to the tRNA-intron endonuclease family. Archaeal short subfamily. Homotetramer; although the tetramer contains four active sites, only two participate in the cleavage. Therefore, it should be considered as a dimer of dimers.

The catalysed reaction is pretRNA = a 3'-half-tRNA molecule with a 5'-OH end + a 5'-half-tRNA molecule with a 2',3'-cyclic phosphate end + an intron with a 2',3'-cyclic phosphate and a 5'-hydroxyl terminus.. Functionally, endonuclease that removes tRNA introns. Cleaves pre-tRNA at the 5'- and 3'-splice sites to release the intron. The products are an intron and two tRNA half-molecules bearing 2',3' cyclic phosphate and 5'-OH termini. Recognizes a pseudosymmetric substrate in which 2 bulged loops of 3 bases are separated by a stem of 4 bp. The chain is tRNA-splicing endonuclease from Thermococcus gammatolerans (strain DSM 15229 / JCM 11827 / EJ3).